Here is a 492-residue protein sequence, read N- to C-terminus: UDP-N-acetylmuramoyl-L-alanyl-D-glutamate--2,6-diaminopimelate ligase (492 aa).

Residue serine 30 participates in UDP-N-acetyl-alpha-D-muramoyl-L-alanyl-D-glutamate binding. 114–120 lines the ATP pocket; that stretch reads GTNGKTS. Residues 156 to 157, serine 183, glutamine 189, and arginine 191 each bind UDP-N-acetyl-alpha-D-muramoyl-L-alanyl-D-glutamate; that span reads TT. Residue lysine 223 is modified to N6-carboxylysine. Residues arginine 389, 413-416, glycine 462, and glutamate 466 contribute to the meso-2,6-diaminopimelate site; that span reads DNPR. The Meso-diaminopimelate recognition motif signature appears at 413–416; sequence DNPR.

It belongs to the MurCDEF family. MurE subfamily. It depends on Mg(2+) as a cofactor. Carboxylation is probably crucial for Mg(2+) binding and, consequently, for the gamma-phosphate positioning of ATP.

It localises to the cytoplasm. It catalyses the reaction UDP-N-acetyl-alpha-D-muramoyl-L-alanyl-D-glutamate + meso-2,6-diaminopimelate + ATP = UDP-N-acetyl-alpha-D-muramoyl-L-alanyl-gamma-D-glutamyl-meso-2,6-diaminopimelate + ADP + phosphate + H(+). The protein operates within cell wall biogenesis; peptidoglycan biosynthesis. Catalyzes the addition of meso-diaminopimelic acid to the nucleotide precursor UDP-N-acetylmuramoyl-L-alanyl-D-glutamate (UMAG) in the biosynthesis of bacterial cell-wall peptidoglycan. The sequence is that of UDP-N-acetylmuramoyl-L-alanyl-D-glutamate--2,6-diaminopimelate ligase from Neisseria meningitidis serogroup B (strain ATCC BAA-335 / MC58).